Here is a 2357-residue protein sequence, read N- to C-terminus: Protein transport protein Sec16A (2357 aa).

2 disordered regions span residues 1–25 (MQPP…RSVF) and 57–303 (FSRQ…STFR). Low complexity-rich tracts occupy residues 64–76 (STPL…SSPP) and 210–227 (QMPG…PSGQ). Residues 285 to 303 (HLQSGSHLANNSDPESTFR) show a composition bias toward polar residues. Ser-296, Ser-314, and Ser-331 each carry phosphoserine. Disordered regions lie at residues 335–359 (NPLA…GSGC), 508–540 (APDA…ARPQ), 553–603 (KPED…TGIF), 758–828 (VQPP…NPPV), 924–987 (LLVQ…SSHQ), 1006–1038 (VNVY…PNLD), and 1059–1151 (QELV…APGP). A compositionally biased stretch (low complexity) spans 520–536 (SVSSSYSSRSHGRLSGS). A phosphoserine mark is found at Ser-559, Ser-569, Ser-587, Ser-589, and Ser-592. A Phosphothreonine modification is found at Thr-593. At Ser-595 the chain carries Phosphoserine. Polar residues-rich tracts occupy residues 766–778 (SGQQ…SAAP) and 803–825 (LQSQ…SLQN). A compositionally biased stretch (polar residues) spans 1006–1028 (VNVYNPSHSDSLASQQSVASHPR). A required for localization to endoplasmic reticulum exit sites region spans residues 1019–1890 (SQQSVASHPR…QQVERQIKEG (872 aa)). A Phosphoserine modification is found at Ser-1069. Residues 1080 to 1101 (ELSNPESLPAQGQAQNSAQSPA) show a composition bias toward polar residues. The tract at residues 1101–1400 (ASLVLVDAGQ…EAPLPPGSFH (300 aa)) is interaction with MIA3. The segment at 1102–1405 (SLVLVDAGQQ…PGSFHGDFAY (304 aa)) is required for endoplasmic reticulum localization. Over residues 1118-1131 (QSSSVSLVSSGSGQ) the composition is skewed to low complexity. The segment covering 1138-1151 (QPWPQPVPALAPGP) has biased composition (pro residues). Phosphoserine is present on residues Ser-1207, Ser-1229, and Ser-1305. A disordered region spans residues 1215 to 1248 (YPEPERPSSRASHSSERPPPRQGYPEGYYSSKSG). The span at 1216 to 1233 (PEPERPSSRASHSSERPP) shows a compositional bias: basic and acidic residues. The segment covering 1307-1322 (FGDRPEKRDNNWRYDP) has biased composition (basic and acidic residues). A disordered region spans residues 1307 to 1378 (FGDRPEKRDN…SLSSHSHQSQ (72 aa)). At Thr-1325 the chain carries Phosphothreonine. Residues Ser-1327, Ser-1347, Ser-1350, Ser-1356, Ser-1359, Ser-1362, Ser-1369, Ser-1573, and Ser-1601 each carry the phosphoserine modification. The segment covering 1333–1354 (DPHRDPYGEEVDRRSVHSEHSA) has biased composition (basic and acidic residues). Low complexity predominate over residues 1356-1375 (SLHSAHSLASRRSSLSSHSH). The segment at 1434-1890 (QVSSRPTSPE…QQVERQIKEG (457 aa)) is central conserved domain (CCD); mediates interaction with RNF183, LRRK2 and SEC13. Phosphothreonine is present on Thr-1907. Ser-1939, Ser-1964, Ser-2022, and Ser-2042 each carry phosphoserine. Disordered regions lie at residues 2049 to 2110 (KFAN…SWFF), 2141 to 2181 (VNLN…PVNM), and 2226 to 2328 (NLFV…MPFY). Thr-2054 carries the post-translational modification Phosphothreonine. Residues Ser-2056, Ser-2073, and Ser-2083 each carry the phosphoserine modification. The span at 2087–2106 (ETKRPGQAAKKETKEPKKGE) shows a compositional bias: basic and acidic residues. Residues 2106-2357 (ESWFFRWLPG…IGQRKHLVLN (252 aa)) form a required for interaction with SEC23A region. Phosphoserine is present on residues Ser-2271 and Ser-2291. 2 stretches are compositionally biased toward low complexity: residues 2289-2302 (ELSR…LSRE) and 2310-2324 (APGD…PSGA).

Belongs to the SEC16 family. As to quaternary structure, SEC16A and SEC16B are each present in multiple copies in a heteromeric complex. Interacts with SEC23A. Interacts with RNF183 and RNF152. Interacts with LRRK2 (via ROC domain). Interacts with SEC13. Interacts with RAB10. Interacts with MIA3. Interacts with GORASP2 in response to ER stress. As to expression, ubiquitous. Expressed at higher levels in the pancreas.

The protein resides in the endoplasmic reticulum membrane. It is found in the golgi apparatus membrane. The protein localises to the cytoplasm. It localises to the perinuclear region. Its subcellular location is the cytosol. The protein resides in the microsome membrane. In terms of biological role, acts as a molecular scaffold that plays a key role in the organization of the endoplasmic reticulum exit sites (ERES), also known as transitional endoplasmic reticulum (tER). SAR1A-GTP-dependent assembly of SEC16A on the ER membrane forms an organized scaffold defining an ERES. Required for secretory cargo traffic from the endoplasmic reticulum to the Golgi apparatus. Mediates the recruitment of MIA3/TANGO to ERES. Regulates both conventional (ER/Golgi-dependent) and GORASP2-mediated unconventional (ER/Golgi-independent) trafficking of CFTR to cell membrane. Positively regulates the protein stability of E3 ubiquitin-protein ligases RNF152 and RNF183 and the ER localization of RNF183. Acts as a RAB10 effector in the regulation of insulin-induced SLC2A4/GLUT4 glucose transporter-enriched vesicles delivery to the cell membrane in adipocytes. This is Protein transport protein Sec16A (SEC16A) from Homo sapiens (Human).